The chain runs to 923 residues: Probable dipeptidyl-aminopeptidase B (923 aa).

The segment covering 1–16 (MATEKGHGRDDEERVP) has biased composition (basic and acidic residues). Residues 1 to 21 (MATEKGHGRDDEERVPLTRGS) form a disordered region. The Cytoplasmic segment spans residues 1 to 99 (MATEKGHGRD…KPMHKSVKIA (99 aa)). The helical; Signal-anchor for type II membrane protein transmembrane segment at 100-120 (LWTLLFLSLGGWSLAFVLFIF) threads the bilayer. Residues 121 to 923 (RSHDTYETPI…GLSYNFKHLH (803 aa)) lie on the Vacuolar side of the membrane. N-linked (GlcNAc...) asparagine glycosylation is found at asparagine 135, asparagine 351, and asparagine 574. Serine 756 (charge relay system) is an active-site residue. A glycan (N-linked (GlcNAc...) asparagine) is linked at asparagine 815. Residues aspartate 833 and histidine 866 each act as charge relay system in the active site. A glycan (N-linked (GlcNAc...) asparagine) is linked at asparagine 902.

The protein belongs to the peptidase S9B family.

It localises to the vacuole membrane. It carries out the reaction Release of an N-terminal dipeptide, Xaa-Yaa-|-Zaa-, from a polypeptide, preferentially when Yaa is Pro, provided Zaa is neither Pro nor hydroxyproline.. Its function is as follows. Type IV dipeptidyl-peptidase which removes N-terminal dipeptides sequentially from polypeptides having unsubstituted N-termini provided that the penultimate residue is proline. The protein is Probable dipeptidyl-aminopeptidase B (DAPB) of Ajellomyces capsulatus (strain G186AR / H82 / ATCC MYA-2454 / RMSCC 2432) (Darling's disease fungus).